Here is a 157-residue protein sequence, read N- to C-terminus: Crossover junction endodeoxyribonuclease RuvC (157 aa).

Active-site residues include aspartate 7, glutamate 66, and aspartate 139. The Mg(2+) site is built by aspartate 7, glutamate 66, and aspartate 139.

This sequence belongs to the RuvC family. As to quaternary structure, homodimer which binds Holliday junction (HJ) DNA. The HJ becomes 2-fold symmetrical on binding to RuvC with unstacked arms; it has a different conformation from HJ DNA in complex with RuvA. In the full resolvosome a probable DNA-RuvA(4)-RuvB(12)-RuvC(2) complex forms which resolves the HJ. Requires Mg(2+) as cofactor.

It is found in the cytoplasm. The catalysed reaction is Endonucleolytic cleavage at a junction such as a reciprocal single-stranded crossover between two homologous DNA duplexes (Holliday junction).. Functionally, the RuvA-RuvB-RuvC complex processes Holliday junction (HJ) DNA during genetic recombination and DNA repair. Endonuclease that resolves HJ intermediates. Cleaves cruciform DNA by making single-stranded nicks across the HJ at symmetrical positions within the homologous arms, yielding a 5'-phosphate and a 3'-hydroxyl group; requires a central core of homology in the junction. The consensus cleavage sequence is 5'-(A/T)TT(C/G)-3'. Cleavage occurs on the 3'-side of the TT dinucleotide at the point of strand exchange. HJ branch migration catalyzed by RuvA-RuvB allows RuvC to scan DNA until it finds its consensus sequence, where it cleaves and resolves the cruciform DNA. The sequence is that of Crossover junction endodeoxyribonuclease RuvC from Helicobacter acinonychis (strain Sheeba).